A 499-amino-acid chain; its full sequence is MLPGWELTLCLLVSLGFHFRSFYEVYKVSREHEEELDQEFELEMDTLFGGLKKDPTDFEWNFWMEWGKRRLVWLFIGHMAVSQLATLLTKKHRPWIVMVYGMWACWCVLGAPGVVMVLLHSTIAFCVAQFRSVLLSWLCSLLLLSTLRLQSVEEVKRRWYKTENEYYLLQFTLTVRCLYYTSFSLELCRQPPSAQPTPSAQGASHSYPWLLTYVFYYPVFHNGPILNFPEFFRQMQQPELNSLQHSLCIVAKGLGRLLCWWWLAELMVHLMYMHALYSSAPLLESVSCWTLGGLALAQVLFFYVKYLVLFGVPALLMRLDGLTPPPLPRCVSTMFSFTGMWRYFDVGLHNFLIRYVYIPLGGSQHGLLGTLLSTATTFAFVSYWHGSYEDLWCWAALNWLGVTVESGVRRLLETPCVRETLARHLSPQAHHRLHALLAACSTSMLILFNLVFLGGIQVGKTYWNRIFLQGWPWVTLSVLGFLYCYSHVDIAWAQTYTVL.

At 1–5 (MLPGW) the chain is on the cytoplasmic side. Residues 6-22 (ELTLCLLVSLGFHFRSF) form a helical membrane-spanning segment. Residues 23-67 (YEVYKVSREHEEELDQEFELEMDTLFGGLKKDPTDFEWNFWMEWG) are Lumenal-facing. Residues 68–84 (KRRLVWLFIGHMAVSQL) traverse the membrane as a helical segment. At 85 to 94 (ATLLTKKHRP) the chain is on the cytoplasmic side. Residues 91–155 (KHRPWIVMVY…TLRLQSVEEV (65 aa)) form an essential for palmitoylation of SHH region. Residues 95–119 (WIVMVYGMWACWCVLGAPGVVMVLL) lie within the membrane without spanning it. Residues 120–131 (HSTIAFCVAQFR) are Cytoplasmic-facing. Residues 132 to 148 (SVLLSWLCSLLLLSTLR) form a helical membrane-spanning segment. Over 149-162 (LQSVEEVKRRWYKT) the chain is Lumenal. Residues 163 to 183 (ENEYYLLQFTLTVRCLYYTSF) form a helical membrane-spanning segment. Residues 184 to 208 (SLELCRQPPSAQPTPSAQGASHSYP) are Cytoplasmic-facing. C188 carries the S-palmitoyl cysteine lipid modification. An intramembrane segment occupies 209–223 (WLLTYVFYYPVFHNG). The Cytoplasmic portion of the chain corresponds to 224–249 (PILNFPEFFRQMQQPELNSLQHSLCI). The S-palmitoyl cysteine moiety is linked to residue C248. Residues 250 to 277 (VAKGLGRLLCWWWLAELMVHLMYMHALY) form a helical membrane-spanning segment. Residues 278–287 (SSAPLLESVS) lie on the Lumenal side of the membrane. The helical transmembrane segment at 288 to 316 (CWTLGGLALAQVLFFYVKYLVLFGVPALL) threads the bilayer. Residues 317–369 (MRLDGLTPPPLPRCVSTMFSFTGMWRYFDVGLHNFLIRYVYIPLGGSQHGLLG) are Cytoplasmic-facing. C330 is lipidated: S-palmitoyl cysteine. Residues 370-386 (TLLSTATTFAFVSYWHG) form a helical membrane-spanning segment. H385 is an active-site residue. Topologically, residues 387–389 (SYE) are lumenal. Residues 390 to 405 (DLWCWAALNWLGVTVE) traverse the membrane as a helical segment. The Cytoplasmic segment spans residues 406–433 (SGVRRLLETPCVRETLARHLSPQAHHRL). The S-palmitoyl cysteine moiety is linked to residue C416. Residues 434 to 454 (HALLAACSTSMLILFNLVFLG) traverse the membrane as a helical segment. Residue 454–461 (GGIQVGKT) participates in GTP binding. At 455–468 (GIQVGKTYWNRIFL) the chain is on the lumenal side. A helical transmembrane segment spans residues 469-487 (QGWPWVTLSVLGFLYCYSH). At 488 to 499 (VDIAWAQTYTVL) the chain is on the cytoplasmic side.

This sequence belongs to the membrane-bound acyltransferase family. HHAT subfamily.

It is found in the endoplasmic reticulum membrane. It localises to the golgi apparatus membrane. The catalysed reaction is N-terminal L-cysteinyl-[protein] + hexadecanoyl-CoA = N-terminal N-hexadecanoyl-L-cysteinyl-[protein] + CoA + H(+). It carries out the reaction N-terminal L-cysteinyl-[protein]-C-terminal glycyl cholesterol ester + hexadecanoyl-CoA = N-terminal N-hexadecanoyl-L-cysteinyl-[protein]-C-terminal glycyl cholesterol ester + CoA + H(+). Functionally, palmitoyl acyltransferase that catalyzes N-terminal palmitoylation of SHH; which is required for SHH signaling during limb development. It also catalyzes N-terminal palmitoylation of DHH. Promotes the transfer of palmitoyl-CoA from the cytoplasmic to the luminal side of the endoplasmic reticulum membrane, where SHH palmitoylation occurs. Plays a role in proper testis cord formation and the differentiation of Leydig cells. This is Protein-cysteine N-palmitoyltransferase HHAT (Hhat) from Mus musculus (Mouse).